The sequence spans 97 residues: MQLGTGLLLAAVLSLQLAAAEAIWCHQCTGFGGCSHGSRCLRDSTHCVTTATRVLSNTEDLPLVTKMCHIGCPDIPSLGLGPYVSIACCQTSLCNHD.

Residues 1-22 (MQLGTGLLLAAVLSLQLAAAEA) form the signal peptide. 5 disulfides stabilise this stretch: cysteine 25-cysteine 47, cysteine 28-cysteine 34, cysteine 40-cysteine 68, cysteine 72-cysteine 88, and cysteine 89-cysteine 94. The UPAR/Ly6 domain maps to 25–95 (CHQCTGFGGC…IACCQTSLCN (71 aa)).

In terms of assembly, interacts with CHRNA3, CHRNA4, CHRNA5, CHRNA7, CHRNB2 and CHRNB4. Interacts with CHRM1 and CHRM3 probably in an allosteric manner. As to expression, expressed at highest levels in cervix and esophagus, followed by adult and fetal skin. Expressed at lower levels in brain, lung, stomach, small intestine, colon, rectum, uterus, and thymus. Not detected in spleen nor bone marrow. Up-regulated 3-fold in psoriatic lesional skin. In the epidermis, predominantly produced by keratinocytes of the suprabasal epidermal compartment (at protein level). In attached gingiva, produced at highest levels by basal cells located in the lowermost epithelial layers (at protein level). Detected in serum (at protein level).

It localises to the secreted. Its function is as follows. Binds and may modulate the functional properties of nicotinic and muscarinic acetylcholine receptors. May regulate keratinocytes proliferation, differentiation and apoptosis. In vitro moderately inhibits ACh-evoked currents of alpha-3:beta-2-containing nAChRs and strongly these of alpha-4:beta-2-containing nAChRs, modulates alpha-7-containing nAChRs, and inhibits nicotine-induced signaling probably implicating alpha-3:beta-4-containing nAChRs. Proposed to act on alpha-3:beta-2 and alpha-7 nAChRs in an orthosteric, and on mAChRs, such as CHRM1 and CHRM3, in an allosteric manner. This is Secreted Ly-6/uPAR domain-containing protein 2 from Homo sapiens (Human).